The following is a 476-amino-acid chain: Bifunctional protein HldE (476 aa).

The ribokinase stretch occupies residues 1 to 318 (MKPILPDYNN…AEAIHGSRDT (318 aa)). 195 to 198 (NMSE) is a binding site for ATP. Residue D264 is part of the active site. Residues 344-476 (MTNGCFDILH…IIDAIKGGRG (133 aa)) are cytidylyltransferase.

In the N-terminal section; belongs to the carbohydrate kinase PfkB family. This sequence in the C-terminal section; belongs to the cytidylyltransferase family. As to quaternary structure, homodimer.

It carries out the reaction D-glycero-beta-D-manno-heptose 7-phosphate + ATP = D-glycero-beta-D-manno-heptose 1,7-bisphosphate + ADP + H(+). The catalysed reaction is D-glycero-beta-D-manno-heptose 1-phosphate + ATP + H(+) = ADP-D-glycero-beta-D-manno-heptose + diphosphate. Its pathway is nucleotide-sugar biosynthesis; ADP-L-glycero-beta-D-manno-heptose biosynthesis; ADP-L-glycero-beta-D-manno-heptose from D-glycero-beta-D-manno-heptose 7-phosphate: step 1/4. It functions in the pathway nucleotide-sugar biosynthesis; ADP-L-glycero-beta-D-manno-heptose biosynthesis; ADP-L-glycero-beta-D-manno-heptose from D-glycero-beta-D-manno-heptose 7-phosphate: step 3/4. It participates in bacterial outer membrane biogenesis; LPS core biosynthesis. Functionally, catalyzes the phosphorylation of D-glycero-D-manno-heptose 7-phosphate at the C-1 position to selectively form D-glycero-beta-D-manno-heptose-1,7-bisphosphate. Catalyzes the ADP transfer from ATP to D-glycero-beta-D-manno-heptose 1-phosphate, yielding ADP-D-glycero-beta-D-manno-heptose. The polypeptide is Bifunctional protein HldE (Vibrio vulnificus (strain CMCP6)).